Reading from the N-terminus, the 393-residue chain is MDFYEQLREELKKLEDSGLLITIRTLESAQGAWININGKKVLNMCSNNYLGLANNERLKEAAINAIKNWGVGPGAVRTIAGTMKIHEELEKKLAEFKKVEATLVVQSGFNANQAVIPTITNEEDGILSDELNHASIIDGVRLSKAKRYIWKHKDLNSLEEQLVKAQRDNCRRKLIITDGVFSMDGDIAPLPGIVELAKKYDALVMVDDAHGEGVLGENGRGIADHFNLTEEVDIEIGTLSKAFGVVGGFIAGKKVLIDYLKQQARPFLFSSSLSPAETAAALEATKILYESDDLVKKLWDNAKYFQSKIKEMGYDIGGTETPITPVMIYDEKKTKEFSSKLYEEGIFASSIVYPTVPKGKARIRVMISALHSKEDLDFALSKFEKIGKSLGTL.

108 to 109 (GF) is a binding site for pyridoxal 5'-phosphate. Position 133 (H133) interacts with substrate. Pyridoxal 5'-phosphate-binding positions include S182, 207-210 (DDAH), and 238-241 (TLSK). At K241 the chain carries N6-(pyridoxal phosphate)lysine. A substrate-binding site is contributed by T355.

This sequence belongs to the class-II pyridoxal-phosphate-dependent aminotransferase family. BioF subfamily. As to quaternary structure, homodimer. Requires pyridoxal 5'-phosphate as cofactor.

The catalysed reaction is 6-carboxyhexanoyl-[ACP] + L-alanine + H(+) = (8S)-8-amino-7-oxononanoate + holo-[ACP] + CO2. It participates in cofactor biosynthesis; biotin biosynthesis. Its function is as follows. Catalyzes the decarboxylative condensation of pimeloyl-[acyl-carrier protein] and L-alanine to produce 8-amino-7-oxononanoate (AON), [acyl-carrier protein], and carbon dioxide. In Petrotoga mobilis (strain DSM 10674 / SJ95), this protein is 8-amino-7-oxononanoate synthase.